Consider the following 443-residue polypeptide: Probable lipase C16A3.12c (443 aa).

The Cytoplasmic portion of the chain corresponds to 1-16; it reads MSGFNKNQIYWGDYVG. The chain crosses the membrane as a helical; Signal-anchor for type II membrane protein span at residues 17–37; the sequence is VIAAFVGVYTELVARIFIYMI. Topologically, residues 38 to 443 are lumenal; the sequence is PERVREWFRV…KHFVKQNGFH (406 aa). The AB hydrolase-1 domain maps to 116–410; the sequence is VVYCHHGLMT…HYEHLDFLWG (295 aa). N-linked (GlcNAc...) asparagine glycans are attached at residues Asn134 and Asn177. Ser210 functions as the Nucleophile in the catalytic mechanism. Asn304 and Asn335 each carry an N-linked (GlcNAc...) asparagine glycan. Catalysis depends on charge relay system residues Asp378 and His404.

Belongs to the AB hydrolase superfamily. Lipase family.

Its subcellular location is the cytoplasm. It is found in the vacuole. It localises to the membrane. Its function is as follows. Probable lipase. The polypeptide is Probable lipase C16A3.12c (Schizosaccharomyces pombe (strain 972 / ATCC 24843) (Fission yeast)).